The primary structure comprises 496 residues: Probable cytosol aminopeptidase (496 aa).

Residues Lys257 and Asp262 each coordinate Mn(2+). Lys269 is a catalytic residue. Residues Asp281, Asp341, and Glu343 each contribute to the Mn(2+) site. The active site involves Arg345.

This sequence belongs to the peptidase M17 family. Mn(2+) serves as cofactor.

It localises to the cytoplasm. It catalyses the reaction Release of an N-terminal amino acid, Xaa-|-Yaa-, in which Xaa is preferably Leu, but may be other amino acids including Pro although not Arg or Lys, and Yaa may be Pro. Amino acid amides and methyl esters are also readily hydrolyzed, but rates on arylamides are exceedingly low.. The enzyme catalyses Release of an N-terminal amino acid, preferentially leucine, but not glutamic or aspartic acids.. Its function is as follows. Presumably involved in the processing and regular turnover of intracellular proteins. Catalyzes the removal of unsubstituted N-terminal amino acids from various peptides. This chain is Probable cytosol aminopeptidase, found in Synechococcus sp. (strain CC9311).